The following is a 436-amino-acid chain: WD repeat domain phosphoinositide-interacting protein 2 (436 aa).

The WD 1 repeat unit spans residues 182–222; it reads AHDSPLAALAFDASGTKLATASEKGTVIRVFSIPEGQKLFE. Residues 223-226 carry the L/FRRG motif motif; the sequence is FRRG. WD repeat units follow at residues 228–267 and 311–349; these read KRCV…EKPQ and GHKN…GGEC.

It belongs to the WD repeat PROPPIN family.

Its subcellular location is the preautophagosomal structure membrane. Functionally, component of the autophagy machinery that controls the major intracellular degradation process by which cytoplasmic materials are packaged into autophagosomes and delivered to lysosomes for degradation. Involved in an early step of the formation of preautophagosomal structures. In Gallus gallus (Chicken), this protein is WD repeat domain phosphoinositide-interacting protein 2 (WIPI2).